A 689-amino-acid chain; its full sequence is Choline transporter-like 1 (689 aa).

Residues 23-43 form a helical membrane-spanning segment; the sequence is IFWLVVYILFWIALLVIAVFS. N-linked (GlcNAc...) asparagine glycosylation is present at N134. 2 helical membrane passes run 199-219 and 233-255; these read FSDI…SLIF and IISW…VLWW. N279 carries N-linked (GlcNAc...) asparagine glycosylation. A run of 2 helical transmembrane segments spans residues 283–303 and 333–353; these read IYVL…VIYY and VLAF…IVCL. N-linked (GlcNAc...) asparagine glycans are attached at residues N375 and N389. The next 4 helical transmembrane spans lie at 412-432, 461-481, 562-582, and 591-611; these read IYII…QLVI, LGSV…RLIL, LVLF…SILM, and FYMA…HIVL.

It belongs to the CTL (choline transporter-like) family.

Its subcellular location is the membrane. This is Choline transporter-like 1 from Aedes aegypti (Yellowfever mosquito).